The chain runs to 607 residues: Elongation factor 4 (607 aa).

The tr-type G domain occupies 11–193; it reads EKIRNFSIIA…QIVEKVPAPT (183 aa). GTP-binding positions include 23-28 and 140-143; these read DHGKST and NKID.

It belongs to the TRAFAC class translation factor GTPase superfamily. Classic translation factor GTPase family. LepA subfamily.

It localises to the cell membrane. The enzyme catalyses GTP + H2O = GDP + phosphate + H(+). Its function is as follows. Required for accurate and efficient protein synthesis under certain stress conditions. May act as a fidelity factor of the translation reaction, by catalyzing a one-codon backward translocation of tRNAs on improperly translocated ribosomes. Back-translocation proceeds from a post-translocation (POST) complex to a pre-translocation (PRE) complex, thus giving elongation factor G a second chance to translocate the tRNAs correctly. Binds to ribosomes in a GTP-dependent manner. The sequence is that of Elongation factor 4 from Streptococcus pneumoniae (strain P1031).